A 469-amino-acid polypeptide reads, in one-letter code: Solute carrier family 52, riboflavin transporter, member 3 (469 aa).

Residues 1-2 (MA) are Cytoplasmic-facing. The helical transmembrane segment at 3–23 (FLMHLLVCVFGMGSWVTINGL) threads the bilayer. The Extracellular portion of the chain corresponds to 24–43 (WVELPLLVMELPEGWYLPSY). The helical transmembrane segment at 44–64 (LTVVIQLANIGPLLVTLLHHF) threads the bilayer. Over 65-71 (RPSCLSE) the chain is Cytoplasmic. A helical membrane pass occupies residues 72–92 (VPIIFTLLGVGTVTCIIFAFL). Residues 93–97 (WNMTS) lie on the Extracellular side of the membrane. Asparagine 94 carries N-linked (GlcNAc...) asparagine glycosylation. Residues 98 to 118 (WVLDGHHSIAFLVLTFFLALV) traverse the membrane as a helical segment. Over 119–137 (DCTSSVTFLPFMSRLPTYY) the chain is Cytoplasmic. A helical transmembrane segment spans residues 138-158 (LTTFFVGEGLSGLLPALVALA). Over 159–220 (QGSGLTTCVN…SRYLPAHFSP (62 aa)) the chain is Extracellular. A glycan (N-linked (GlcNAc...) asparagine) is linked at asparagine 168. The chain crosses the membrane as a helical span at residues 221–241 (LVFFLLLSIMMACCLVAFFVL). At 242 to 292 (QRQPRCWEASVEDLLNDQVTLHSIRPREENDLGPAGTVDSSQGQGYLEEKA) the chain is on the cytoplasmic side. Phosphoserine is present on serine 251. Residues 293–313 (APCCPAHLAFIYTLVAFVNAL) form a helical membrane-spanning segment. Over 314-335 (TNGMLPSVQTYSCLSYGPVAYH) the chain is Extracellular. A helical transmembrane segment spans residues 336 to 356 (LAATLSIVANPLASLVSMFLP). Residues 357 to 359 (NRS) lie on the Cytoplasmic side of the membrane. Residues 360–380 (LLFLGVLSVLGTCFGGYNMAM) form a helical membrane-spanning segment. Topologically, residues 381 to 396 (AVMSPCPLLQGHWGGE) are extracellular. A disulfide bond links cysteine 386 and cysteine 463. Residues 397-417 (VLIVASWVLFSGCLSYVKVML) traverse the membrane as a helical segment. Topologically, residues 418–427 (GVVLRDLSRS) are cytoplasmic. Residues 428 to 448 (ALLWCGAAVQLGSLLGALLMF) traverse the membrane as a helical segment. The Extracellular portion of the chain corresponds to 449–469 (PLVNVLRLFSSADFCNLHCPA).

Belongs to the riboflavin transporter family. Predominantly expressed in testis. Highly expressed in small intestine and prostate.

It is found in the apical cell membrane. The protein localises to the cell membrane. Its subcellular location is the nucleus membrane. The protein resides in the cytoplasm. The catalysed reaction is riboflavin(in) = riboflavin(out). Its activity is regulated as follows. Activity is strongly inhibited by riboflavin analogs, such as lumiflavin, flavin mononucleotide (FMN), flavin adenine dinucleotide (FAD), by methylene blue, and to a lesser extent by amiloride. Riboflavin transport is Na(+)-independent at low pH but significantly reduced by Na(+) depletion under neutral pH conditions. In terms of biological role, plasma membrane transporter mediating the uptake by cells of the water soluble vitamin B2/riboflavin that plays a key role in biochemical oxidation-reduction reactions of the carbohydrate, lipid, and amino acid metabolism. Humans are unable to synthesize vitamin B2/riboflavin and must obtain it via intestinal absorption. The chain is Solute carrier family 52, riboflavin transporter, member 3 (SLC52A3) from Homo sapiens (Human).